Here is a 1336-residue protein sequence, read N- to C-terminus: Misshapen-like kinase 1 (1336 aa).

Positions 25–289 (FELVEVVGNG…TEQLLKFPFI (265 aa)) constitute a Protein kinase domain. Residues 31–39 (VGNGTYGQV) and Lys54 each bind ATP. Asp153 (proton acceptor) is an active-site residue. Disordered stretches follow at residues 299–347 (RIQL…NVPG), 363–383 (KSNS…QRDP), and 395–890 (QRRI…GGTM). Over residues 317-333 (EETEYEYSGSEEEDDSH) the composition is skewed to acidic residues. 2 positions are modified to phosphoserine: Ser324 and Ser326. Residues 371–380 (QQQQLQQQQQ) are compositionally biased toward low complexity. The span at 396-466 (RRIEEQKEER…EEQRQSERLQ (71 aa)) shows a compositional bias: basic and acidic residues. Residues 479–496 (QKQQQQQQQQQQQQQQQQ) are compositionally biased toward low complexity. An omega-N-methylarginine mark is found at Arg502 and Arg510. Basic and acidic residues predominate over residues 519 to 529 (AWAREVEERAR). Polar residues predominate over residues 531–544 (NKQQNSPLAKTKPS). Pro residues predominate over residues 548–562 (PEPPIPQASPSPPGP). Polar residues predominate over residues 599–609 (RSQSLQDQPTR). The segment covering 622 to 632 (PAAVPTPTATP) has biased composition (low complexity). Residue Ser643 is modified to Phosphoserine. Positions 672–684 (QRTSSIATALNTS) are enriched in polar residues. Ser703 is modified (phosphoserine). Residues 718 to 731 (PKPPGPPAQPPGPP) show a composition bias toward pro residues. A compositionally biased stretch (basic and acidic residues) spans 738–750 (DLRRSDPGWERSD). 5 positions are modified to phosphoserine: Ser756, Ser765, Ser781, Ser782, and Ser786. Residues 808–825 (LLKERTLDEAPKPPKKAM) show a composition bias toward basic and acidic residues. A compositionally biased stretch (acidic residues) spans 832–848 (EEVESSEDEEEEGDGEP). A mediates interaction with RAP2A region spans residues 870–1336 (MVVHDVEEVS…TLNRNCIMNW (467 aa)). Thr895 carries the phosphothreonine modification. Residues 909-946 (GYTNLPDVVQPSHSPTENSQGQSPPTKDGGGDYQSRGL) form a disordered region. Residues 919-933 (PSHSPTENSQGQSPP) show a composition bias toward polar residues. In terms of domain architecture, CNH spans 1023 to 1310 (NSEILCAALW…KFLCERNDKV (288 aa)).

The protein belongs to the protein kinase superfamily. STE Ser/Thr protein kinase family. STE20 subfamily. Interacts with RAP2A and NCK1. Interacts with TANC1. The cofactor is Mg(2+). Post-translationally, autophosphorylated.

It is found in the cytoplasm. Its subcellular location is the postsynaptic density. It localises to the cell projection. The protein localises to the axon. The protein resides in the dendrite. The catalysed reaction is L-seryl-[protein] + ATP = O-phospho-L-seryl-[protein] + ADP + H(+). It catalyses the reaction L-threonyl-[protein] + ATP = O-phospho-L-threonyl-[protein] + ADP + H(+). Its function is as follows. Serine/threonine kinase which acts as a negative regulator of Ras-related Rap2-mediated signal transduction to control neuronal structure and AMPA receptor trafficking. Required for normal synaptic density, dendrite complexity, as well as surface AMPA receptor expression in hippocampal neurons. Can activate the JNK and MAPK14/p38 pathways and mediates stimulation of the stress-activated protein kinase MAPK14/p38 MAPK downstream of the Raf/ERK pathway. Phosphorylates TANC1 upon stimulation by RAP2A, MBP and SMAD1. Has an essential function in negative selection of thymocytes, perhaps by coupling NCK1 to activation of JNK1. Activator of the Hippo signaling pathway which plays a pivotal role in organ size control and tumor suppression by restricting proliferation and promoting apoptosis. MAP4Ks act in parallel to and are partially redundant with STK3/MST2 and STK4/MST2 in the phosphorylation and activation of LATS1/2, and establish MAP4Ks as components of the expanded Hippo pathway. The polypeptide is Misshapen-like kinase 1 (Mink1) (Rattus norvegicus (Rat)).